Here is a 558-residue protein sequence, read N- to C-terminus: Membrane protein insertase YidC (558 aa).

5 helical membrane passes run 3-23 (IKRT…FDNW), 364-384 (FVGN…AVFF), 438-458 (LPVV…LASV), 477-497 (PYFI…KLNP), and 508-528 (MMFM…GLVL).

Belongs to the OXA1/ALB3/YidC family. Type 1 subfamily. As to quaternary structure, interacts with the Sec translocase complex via SecD. Specifically interacts with transmembrane segments of nascent integral membrane proteins during membrane integration.

Its subcellular location is the cell inner membrane. Its function is as follows. Required for the insertion and/or proper folding and/or complex formation of integral membrane proteins into the membrane. Involved in integration of membrane proteins that insert both dependently and independently of the Sec translocase complex, as well as at least some lipoproteins. Aids folding of multispanning membrane proteins. The chain is Membrane protein insertase YidC from Burkholderia mallei (strain NCTC 10247).